A 494-amino-acid chain; its full sequence is Ribose import ATP-binding protein RbsA (494 aa).

ABC transporter domains lie at 3–240 and 250–494; these read IEMK…VGRS and SQIS…TGGE. 35–42 provides a ligand contact to ATP; sequence GENGAGKS.

This sequence belongs to the ABC transporter superfamily. Ribose importer (TC 3.A.1.2.1) family. As to quaternary structure, the complex is composed of an ATP-binding protein (RbsA), two transmembrane proteins (RbsC) and a solute-binding protein (RbsB).

The protein localises to the cell membrane. It carries out the reaction D-ribose(out) + ATP + H2O = D-ribose(in) + ADP + phosphate + H(+). Its function is as follows. Part of the ABC transporter complex RbsABC involved in ribose import. Responsible for energy coupling to the transport system. The sequence is that of Ribose import ATP-binding protein RbsA from Bacillus cereus (strain ZK / E33L).